Reading from the N-terminus, the 414-residue chain is Arrestin domain-containing protein 3 (414 aa).

2 consecutive short sequence motifs (PPxY motif) follow at residues 346 to 349 (PPSY) and 391 to 394 (PPLY). A disordered region spans residues 393 to 414 (LYSEIDPNPDQSADDRPSCPSR). The segment covering 405–414 (ADDRPSCPSR) has biased composition (basic and acidic residues).

Belongs to the arrestin family. In terms of assembly, interacts (via PPxY motifs) with NEDD4 (via WW domains). Interacts with ADRB2. Interacts with ADRB3. Interacts with HGS (via PPxY motifs). Does not bind TXN (thioredoxin). Interacts with ITCH. Interacts with WWP1 (via WW domains). Highly expressed in skeletal muscle, placenta, kidney, lung, liver, blood, adrenal gland, lymph node, mammary gland, thyroid, and trachea. Very low levels in colon, thymus, spleen, small intestine, bladder and bone marrow. Strong expression in differentiated adipocytes compared to preadipocytes. Detected in omental fat and subcutaneous fat tissue.

It localises to the cytoplasm. The protein localises to the cell membrane. Its subcellular location is the lysosome. The protein resides in the endosome. It is found in the early endosome. Functionally, adapter protein that plays a role in regulating cell-surface expression of adrenergic receptors and probably also other G protein-coupled receptors. Plays a role in NEDD4-mediated ubiquitination and endocytosis af activated ADRB2 and subsequent ADRB2 degradation. May recruit NEDD4 to ADRB2. Alternatively, may function as adapter protein that does not play a major role in recruiting NEDD4 to ADRB2, but rather plays a role in a targeting ADRB2 to endosomes. The polypeptide is Arrestin domain-containing protein 3 (ARRDC3) (Homo sapiens (Human)).